We begin with the raw amino-acid sequence, 287 residues long: AA9 family lytic polysaccharide monooxygenase C (287 aa).

Residues 1 to 16 form the signal peptide; sequence MKSVLVALATATAVSA. A Cu(2+)-binding site is contributed by His17. Residue Asn22 is glycosylated (N-linked (GlcNAc...) asparagine). 2 disulfides stabilise this stretch: Cys77–Cys230 and Cys200–Cys284. His114 serves as a coordination point for Cu(2+). Positions 216 and 225 each coordinate O2. Tyr227 contacts Cu(2+).

This sequence belongs to the polysaccharide monooxygenase AA9 family. Cu(2+) is required as a cofactor.

Its subcellular location is the secreted. It catalyses the reaction [(1-&gt;4)-beta-D-glucosyl]n+m + reduced acceptor + O2 = 4-dehydro-beta-D-glucosyl-[(1-&gt;4)-beta-D-glucosyl]n-1 + [(1-&gt;4)-beta-D-glucosyl]m + acceptor + H2O.. Its function is as follows. Lytic polysaccharide monooxygenase (LPMO) that depolymerizes crystalline and amorphous polysaccharides via the oxidation of scissile alpha- or beta-(1-4)-glycosidic bonds, yielding C1 or C4 oxidation products. Catalysis by LPMOs requires the reduction of the active-site copper from Cu(II) to Cu(I) by a reducing agent and H(2)O(2) or O(2) as a cosubstrate. The sequence is that of AA9 family lytic polysaccharide monooxygenase C from Podospora anserina (strain S / ATCC MYA-4624 / DSM 980 / FGSC 10383) (Pleurage anserina).